The chain runs to 212 residues: Histidine biosynthesis bifunctional protein HisIE (212 aa).

Positions 1–109 (MRPDFHKQEL…ELIPFDDSDI (109 aa)) are phosphoribosyl-AMP cyclohydrolase. A phosphoribosyl-ATP pyrophosphohydrolase region spans residues 110–212 (FSELEKQIID…KKEFHTRTAD (103 aa)).

It in the N-terminal section; belongs to the PRA-CH family. In the C-terminal section; belongs to the PRA-PH family.

It is found in the cytoplasm. The catalysed reaction is 1-(5-phospho-beta-D-ribosyl)-ATP + H2O = 1-(5-phospho-beta-D-ribosyl)-5'-AMP + diphosphate + H(+). It catalyses the reaction 1-(5-phospho-beta-D-ribosyl)-5'-AMP + H2O = 1-(5-phospho-beta-D-ribosyl)-5-[(5-phospho-beta-D-ribosylamino)methylideneamino]imidazole-4-carboxamide. It participates in amino-acid biosynthesis; L-histidine biosynthesis; L-histidine from 5-phospho-alpha-D-ribose 1-diphosphate: step 2/9. Its pathway is amino-acid biosynthesis; L-histidine biosynthesis; L-histidine from 5-phospho-alpha-D-ribose 1-diphosphate: step 3/9. The polypeptide is Histidine biosynthesis bifunctional protein HisIE (hisI) (Lactococcus lactis subsp. lactis (strain IL1403) (Streptococcus lactis)).